A 957-amino-acid polypeptide reads, in one-letter code: Glycine dehydrogenase (decarboxylating) (957 aa).

Lys-708 carries the N6-(pyridoxal phosphate)lysine modification.

It belongs to the GcvP family. The glycine cleavage system is composed of four proteins: P, T, L and H. Pyridoxal 5'-phosphate serves as cofactor.

It catalyses the reaction N(6)-[(R)-lipoyl]-L-lysyl-[glycine-cleavage complex H protein] + glycine + H(+) = N(6)-[(R)-S(8)-aminomethyldihydrolipoyl]-L-lysyl-[glycine-cleavage complex H protein] + CO2. In terms of biological role, the glycine cleavage system catalyzes the degradation of glycine. The P protein binds the alpha-amino group of glycine through its pyridoxal phosphate cofactor; CO(2) is released and the remaining methylamine moiety is then transferred to the lipoamide cofactor of the H protein. The polypeptide is Glycine dehydrogenase (decarboxylating) (Salmonella dublin (strain CT_02021853)).